Consider the following 776-residue polypeptide: Glucocorticoid receptor (776 aa).

Disordered stretches follow at residues 1–25, 47–86, and 394–415; these read MDPKDLLKPSSGSPAVRGSPHYNDK, SCPTSTASQSNTRQQQHFQKQLTATGDSTNGLNNNVPQPD, and SSPGIRSDASPSPSTSSTSTGP. A modulating region spans residues 1–419; it reads MDPKDLLKPS…STSTGPPPKL (419 aa). The span at 47–83 shows a compositional bias: polar residues; it reads SCPTSTASQSNTRQQQHFQKQLTATGDSTNGLNNNVP. Residues 403-413 are compositionally biased toward low complexity; the sequence is SPSPSTSSTST. 2 NR C4-type zinc fingers span residues 420-440 and 456-480; these read CLVCSDEASGCHYGVLTCGSC and CAGRNDCIIDKIRRKNCPACRYRKC. Residues 420–485 constitute a DNA-binding region (nuclear receptor); it reads CLVCSDEASG…RYRKCLQAGM (66 aa). The interval 486–522 is hinge; that stretch reads NLEARKTKKKIKGIQQSTTATARESPETSMTRTLVPA. Residues 523 to 757 form the NR LBD domain; that stretch reads SVAQLTPTLI…FPDMLSEIIS (235 aa).

It belongs to the nuclear hormone receptor family. NR3 subfamily. Heteromultimeric cytoplasmic complex with HSP90. Upon ligand binding the complex undergoes a conformation change and moves to the nucleus, where it dissociates. Binds to DNA as a homodimer, and as heterodimer with NR3C2. Interaction with numerous other transcription factors modulates transcription activation. Expressed in liver with relative abundance.

Its subcellular location is the cytoplasm. The protein localises to the nucleus. It localises to the mitochondrion. The protein resides in the cytoskeleton. It is found in the spindle. Its subcellular location is the microtubule organizing center. The protein localises to the centrosome. Functionally, receptor for glucocorticoids (GC). Has a dual mode of action: as a transcription factor that binds to glucocorticoid response elements (GRE), both for nuclear and mitochondrial DNA, and as a modulator of other transcription factors. Affects inflammatory responses, cellular proliferation and differentiation in target tissues. Involved in chromatin remodeling. Plays a role in rapid mRNA degradation by binding to the 5' UTR of target mRNAs and interacting with PNRC2 in a ligand-dependent manner which recruits the RNA helicase UPF1 and the mRNA-decapping enzyme DCP1A, leading to RNA decay. Could act as a coactivator for STAT5-dependent transcription upon growth hormone (GH) stimulation and could reveal an essential role of hepatic GR in the control of body growth. Mediates glucocorticoid-induced apoptosis. Promotes accurate chromosome segregation during mitosis. May act as a tumor suppressor. May play a negative role in adipogenesis through the regulation of lipolytic and antilipogenic gene expression. This is Glucocorticoid receptor (nr3c1) from Xenopus laevis (African clawed frog).